The primary structure comprises 66 residues: Large ribosomal subunit protein uL29 (66 aa).

It belongs to the universal ribosomal protein uL29 family.

In Bartonella henselae (strain ATCC 49882 / DSM 28221 / CCUG 30454 / Houston 1) (Rochalimaea henselae), this protein is Large ribosomal subunit protein uL29.